The sequence spans 517 residues: DNA primase DnaG (517 aa).

In terms of domain architecture, Toprim spans 171 to 257 (DAIIILEGRA…CVEDLVQKEV (87 aa)). Positions 177, 219, and 221 each coordinate Mg(2+).

Belongs to the archaeal DnaG primase family. Forms a ternary complex with MCM helicase and DNA. Component of the archaeal exosome complex. The cofactor is Mg(2+).

The enzyme catalyses ssDNA + n NTP = ssDNA/pppN(pN)n-1 hybrid + (n-1) diphosphate.. In terms of biological role, RNA polymerase that catalyzes the synthesis of short RNA molecules used as primers for DNA polymerase during DNA replication. Also part of the exosome, which is a complex involved in RNA degradation. Acts as a poly(A)-binding protein that enhances the interaction between heteromeric, adenine-rich transcripts and the exosome. The sequence is that of DNA primase DnaG from Methanosarcina barkeri (strain Fusaro / DSM 804).